Reading from the N-terminus, the 305-residue chain is Taste receptor type 2 member 136 (305 aa).

The Extracellular segment spans residues Met1–Ala9. A helical transmembrane segment spans residues Ser10–Val30. The Cytoplasmic portion of the chain corresponds to Asn31–Arg46. The chain crosses the membrane as a helical span at residues Ile47–Ser67. Residues Ser68–Ser69 are Extracellular-facing. A helical transmembrane segment spans residues Val70–Thr90. Residues Asn91 to Asn99 lie on the Cytoplasmic side of the membrane. A helical transmembrane segment spans residues Ile100 to Leu120. Residues Lys121 to Pro127 lie on the Extracellular side of the membrane. A helical membrane pass occupies residues Tyr128 to Cys148. Residues Glu149 to Thr176 are Cytoplasmic-facing. The chain crosses the membrane as a helical span at residues Phe177–Cys197. Residues Ser198 to Lys223 lie on the Extracellular side of the membrane. Residues Val224 to Ile244 traverse the membrane as a helical segment. Residues Ser245–Pro305 are Cytoplasmic-facing.

This sequence belongs to the G-protein coupled receptor T2R family.

The protein localises to the membrane. Putative taste receptor which may play a role in the perception of bitterness. The polypeptide is Taste receptor type 2 member 136 (Tas2r136) (Mus musculus (Mouse)).